Consider the following 1291-residue polypeptide: Vacuolating cytotoxin autotransporter (1291 aa).

An N-terminal signal peptide occupies residues 1–33; it reads MEIQQTHRKINRPLVSLALVGALVSITPQQSHA. Residues 326-374 are disordered; the sequence is PPEGGYKDKPNDKPSNTTQNNAKNDKQESSQNNSNTQVINPPNSAQKTE. Polar residues-rich tracts occupy residues 338 to 347 and 354 to 374; these read KPSNTTQNNA and SSQNNSNTQVINPPNSAQKTE. Positions 1018–1291 constitute an Autotransporter domain; sequence KYEKPTNVWA…ASNLGMRYSF (274 aa).

The protein resides in the periplasm. Its subcellular location is the secreted. It is found in the cell surface. It localises to the cell outer membrane. Induces vacuolation of eukaryotic cells. Causes ulceration and gastric lesions. The protein is Vacuolating cytotoxin autotransporter (vacA) of Helicobacter pylori (Campylobacter pylori).